Consider the following 477-residue polypeptide: UDP-N-acetylglucosamine pyrophosphorylase (477 aa).

Residues 109-112 carry the Substrate binding motif; it reads MAGG. UTP is bound by residues 109 to 112, Lys123, and Gln194; that span reads MAGG. The residue at position 218 (Ser218) is a Phosphoserine. Gly221 contacts UTP. Asn222 provides a ligand contact to substrate. Asp252 provides a ligand contact to UTP. A Substrate binding motif is present at residues 302-303; sequence EY. Residue Lys377 coordinates UTP. Lys409 is a substrate binding site. At Ser461 the chain carries Phosphoserine.

The protein belongs to the UDPGP type 1 family.

The protein resides in the cytoplasm. The enzyme catalyses N-acetyl-alpha-D-glucosamine 1-phosphate + UTP + H(+) = UDP-N-acetyl-alpha-D-glucosamine + diphosphate. Its pathway is nucleotide-sugar biosynthesis; UDP-N-acetyl-alpha-D-glucosamine biosynthesis; UDP-N-acetyl-alpha-D-glucosamine from N-acetyl-alpha-D-glucosamine 1-phosphate: step 1/1. UDP-N-acetylglucosamine pyrophosphorylase that utilizes N-acetylglucosamine-1-phosphate as substrate. Together with AGM1, is involved in the production of UDP-N-acetylglucosamine from N-acetylglucosamine-6-phosphate. The chain is UDP-N-acetylglucosamine pyrophosphorylase (QRI1) from Saccharomyces cerevisiae (strain ATCC 204508 / S288c) (Baker's yeast).